We begin with the raw amino-acid sequence, 192 residues long: Ribosomal RNA small subunit methyltransferase G (192 aa).

S-adenosyl-L-methionine is bound by residues Gly63, Leu68, 112–113 (IE), and Arg125.

It belongs to the methyltransferase superfamily. RNA methyltransferase RsmG family.

The protein localises to the cytoplasm. It catalyses the reaction guanosine(527) in 16S rRNA + S-adenosyl-L-methionine = N(7)-methylguanosine(527) in 16S rRNA + S-adenosyl-L-homocysteine. Its function is as follows. Specifically methylates the N7 position of guanine in position 527 of 16S rRNA. This chain is Ribosomal RNA small subunit methyltransferase G, found in Rickettsia africae (strain ESF-5).